The following is a 468-amino-acid chain: Glutamate--tRNA ligase (468 aa).

Positions 12 to 22 (PSPTGFIHLGN) match the 'HIGH' region motif. The short motif at 244 to 248 (KMSKR) is the 'KMSKS' region element. Lys-247 lines the ATP pocket.

It belongs to the class-I aminoacyl-tRNA synthetase family. Glutamate--tRNA ligase type 1 subfamily. In terms of assembly, monomer.

Its subcellular location is the cytoplasm. It carries out the reaction tRNA(Glu) + L-glutamate + ATP = L-glutamyl-tRNA(Glu) + AMP + diphosphate. Catalyzes the attachment of glutamate to tRNA(Glu) in a two-step reaction: glutamate is first activated by ATP to form Glu-AMP and then transferred to the acceptor end of tRNA(Glu). The polypeptide is Glutamate--tRNA ligase (Polynucleobacter necessarius subsp. necessarius (strain STIR1)).